We begin with the raw amino-acid sequence, 512 residues long: Cytokinin hydroxylase (512 aa).

A helical transmembrane segment spans residues 2–22; sequence MVTLVLKYVLVIVMTLILRVL. Cys-458 is a heme binding site.

It belongs to the cytochrome P450 family. The cofactor is heme. Specifically expressed in roots.

The protein localises to the membrane. The catalysed reaction is N(6)-(dimethylallyl)adenosine 5'-phosphate + NADPH + O2 + H(+) = 9-ribosyl-trans-zeatin 5'-phosphate + NADP(+) + H2O. It carries out the reaction N(6)-(dimethylallyl)adenosine 5'-diphosphate + NADPH + O2 + H(+) = 9-ribosyl-trans-zeatin 5'-diphosphate + NADP(+) + H2O. It catalyses the reaction N(6)-(dimethylallyl)adenosine 5'-triphosphate + NADPH + O2 + H(+) = 9-ribosyl-trans-zeatin 5'-triphosphate + NADP(+) + H2O. In terms of biological role, cytokinin hydroxylase that catalyzes the biosynthesis of trans-zeatin via the isopentenyladenine riboside 5'-monophosphate (iPRMP)-dependent pathway. Can use isopentenyladenosine-5'-monophosphate, isopentenyladenosine-5'-diphosphate and isopentenyladenosine-5'-triphosphate as substrate. The polypeptide is Cytokinin hydroxylase (CYP735A2) (Arabidopsis thaliana (Mouse-ear cress)).